A 147-amino-acid chain; its full sequence is MEKTFLMVKPDGVQRNLIGEIVSRFEKKGYQLVGAKLMTVSRELAEEHYAEHKERPFFGELVDFITSGPVFAMVWQGNNVITTARAMMGKTNPVDAASGTIRGDFATSVGMNIIHGSDSPESAEREIGLWFSAEEVLSFEKTIQRWI.

ATP contacts are provided by Lys-9, Phe-57, Arg-85, Thr-91, Arg-102, and Asn-112. His-115 (pros-phosphohistidine intermediate) is an active-site residue.

Belongs to the NDK family. In terms of assembly, homotetramer. Requires Mg(2+) as cofactor.

It localises to the cytoplasm. The enzyme catalyses a 2'-deoxyribonucleoside 5'-diphosphate + ATP = a 2'-deoxyribonucleoside 5'-triphosphate + ADP. It carries out the reaction a ribonucleoside 5'-diphosphate + ATP = a ribonucleoside 5'-triphosphate + ADP. Major role in the synthesis of nucleoside triphosphates other than ATP. The ATP gamma phosphate is transferred to the NDP beta phosphate via a ping-pong mechanism, using a phosphorylated active-site intermediate. In Brevibacillus brevis (strain 47 / JCM 6285 / NBRC 100599), this protein is Nucleoside diphosphate kinase.